We begin with the raw amino-acid sequence, 220 residues long: Orotidine 5'-phosphate decarboxylase (220 aa).

Substrate contacts are provided by residues aspartate 12, lysine 34, 60-69 (DFKVADIPNT), serine 117, 170-180 (PGVGAQGGKAS), glycine 193, and arginine 194. Lysine 62 serves as the catalytic Proton donor.

This sequence belongs to the OMP decarboxylase family. Type 1 subfamily. In terms of assembly, homodimer.

It catalyses the reaction orotidine 5'-phosphate + H(+) = UMP + CO2. Its pathway is pyrimidine metabolism; UMP biosynthesis via de novo pathway; UMP from orotate: step 2/2. Its function is as follows. Catalyzes the decarboxylation of orotidine 5'-monophosphate (OMP) to uridine 5'-monophosphate (UMP). This chain is Orotidine 5'-phosphate decarboxylase, found in Methanosarcina mazei (strain ATCC BAA-159 / DSM 3647 / Goe1 / Go1 / JCM 11833 / OCM 88) (Methanosarcina frisia).